A 384-amino-acid chain; its full sequence is 1-deoxy-D-xylulose 5-phosphate reductoisomerase (384 aa).

Positions 10, 11, 12, 13, 36, 38, and 122 each coordinate NADPH. Residue lysine 123 participates in 1-deoxy-D-xylulose 5-phosphate binding. NADPH is bound at residue glutamate 124. Aspartate 148 contributes to the Mn(2+) binding site. 1-deoxy-D-xylulose 5-phosphate is bound by residues serine 149, glutamate 150, serine 174, and histidine 197. Residue glutamate 150 participates in Mn(2+) binding. Glycine 203 is a binding site for NADPH. Serine 210, asparagine 215, lysine 216, and glutamate 219 together coordinate 1-deoxy-D-xylulose 5-phosphate. A Mn(2+)-binding site is contributed by glutamate 219.

The protein belongs to the DXR family. Mg(2+) is required as a cofactor. It depends on Mn(2+) as a cofactor.

The enzyme catalyses 2-C-methyl-D-erythritol 4-phosphate + NADP(+) = 1-deoxy-D-xylulose 5-phosphate + NADPH + H(+). Its pathway is isoprenoid biosynthesis; isopentenyl diphosphate biosynthesis via DXP pathway; isopentenyl diphosphate from 1-deoxy-D-xylulose 5-phosphate: step 1/6. Catalyzes the NADPH-dependent rearrangement and reduction of 1-deoxy-D-xylulose-5-phosphate (DXP) to 2-C-methyl-D-erythritol 4-phosphate (MEP). The sequence is that of 1-deoxy-D-xylulose 5-phosphate reductoisomerase from Geotalea daltonii (strain DSM 22248 / JCM 15807 / FRC-32) (Geobacter daltonii).